The primary structure comprises 185 residues: Glycerol-3-phosphate acyltransferase 4 (185 aa).

6 helical membrane passes run Met1–Ala21, Leu47–Ile67, Leu69–Leu89, Leu113–Phe133, Val137–Leu157, and Pro158–Ile178.

It belongs to the PlsY family. Probably interacts with PlsX.

The protein resides in the cell membrane. It carries out the reaction an acyl phosphate + sn-glycerol 3-phosphate = a 1-acyl-sn-glycero-3-phosphate + phosphate. Its pathway is lipid metabolism; phospholipid metabolism. Its function is as follows. Catalyzes the transfer of an acyl group from acyl-phosphate (acyl-PO(4)) to glycerol-3-phosphate (G3P) to form lysophosphatidic acid (LPA). This enzyme utilizes acyl-phosphate as fatty acyl donor, but not acyl-CoA or acyl-ACP. The sequence is that of Glycerol-3-phosphate acyltransferase 4 from Dehalococcoides mccartyi (strain ATCC BAA-2266 / KCTC 15142 / 195) (Dehalococcoides ethenogenes (strain 195)).